We begin with the raw amino-acid sequence, 254 residues long: AA9 family lytic polysaccharide monooxygenase A (254 aa).

A signal peptide spans 1–19 (MKYSILGLTALSFVASAAA). Histidine 20 contacts Cu(2+). Histidine 20 bears the Methylhistidine mark. Valine 28 is a binding site for (1,4-beta-D-glucosyl)n. Asparagine 52 carries N-linked (GlcNAc...) asparagine glycosylation. A disulfide bridge links cysteine 60 with cysteine 186. The (1,4-beta-D-glucosyl)n site is built by valine 66, valine 67, aspartate 77, and asparagine 86. Histidine 97 serves as a coordination point for Cu(2+). An N-linked (GlcNAc...) asparagine glycan is attached at asparagine 129. Residues valine 148 and arginine 159 each contribute to the (1,4-beta-D-glucosyl)n site. O2 contacts are provided by histidine 166 and glutamine 181. Tyrosine 183 provides a ligand contact to Cu(2+).

The protein belongs to the polysaccharide monooxygenase AA9 family. Cu(2+) serves as cofactor. The catalytically essential N-terminal histidine His-20 is post-translationally modified by methylation to prevent protonation of the histidine side chain, and protect the critical active site of the enzyme from oxidative damage.

The protein localises to the secreted. The catalysed reaction is [(1-&gt;4)-beta-D-glucosyl]n+m + reduced acceptor + O2 = 4-dehydro-beta-D-glucosyl-[(1-&gt;4)-beta-D-glucosyl]n-1 + [(1-&gt;4)-beta-D-glucosyl]m + acceptor + H2O.. Its activity is regulated as follows. The polyphenol cinnamtannin B1 contained in methanolic extract of Cinnamomum cassia (cinnamon) acts as an inhibitor of catalytic activity. Functionally, lytic polysaccharide monooxygenase (LPMO) that depolymerizes crystalline and amorphous polysaccharides via the oxidation of scissile alpha- or beta-(1-4)-glycosidic bonds, yielding C1 or C4 oxidation product. Catalysis by LPMOs requires the reduction of the active-site copper from Cu(II) to Cu(I) by a reducing agent and H(2)O(2) or O(2) as a cosubstrate. Is able to cleave phosphoric acid swollen cellulose (PASC) in the presence of a reducing agent, yielding a range of cellooligosaccharides dominated by cellobiose and cellotriose. Activity is less sensitive to the reducing agent potential when cleaving xylan, suggesting that distinct catalytic mechanisms exist for xylan and glucan cleavage. The polypeptide is AA9 family lytic polysaccharide monooxygenase A (Panus similis (Lentinoid fungus)).